Consider the following 384-residue polypeptide: DNA replication and repair protein RecF (384 aa).

Residue 30–37 (GNNAQGKS) participates in ATP binding.

It belongs to the RecF family.

It localises to the cytoplasm. In terms of biological role, the RecF protein is involved in DNA metabolism; it is required for DNA replication and normal SOS inducibility. RecF binds preferentially to single-stranded, linear DNA. It also seems to bind ATP. This is DNA replication and repair protein RecF from Gloeothece citriformis (strain PCC 7424) (Cyanothece sp. (strain PCC 7424)).